We begin with the raw amino-acid sequence, 97 residues long: Large ribosomal subunit protein uL30m (97 aa).

The protein belongs to the universal ribosomal protein uL30 family. In terms of assembly, component of the mitochondrial large ribosomal subunit (mt-LSU). Mature yeast 74S mitochondrial ribosomes consist of a small (37S) and a large (54S) subunit. The 37S small subunit contains a 15S ribosomal RNA (15S mt-rRNA) and at least 32 different proteins. The 54S large subunit contains a 21S rRNA (21S mt-rRNA) and at least 45 different proteins.

Its subcellular location is the mitochondrion. Component of the mitochondrial ribosome (mitoribosome), a dedicated translation machinery responsible for the synthesis of mitochondrial genome-encoded proteins, including at least some of the essential transmembrane subunits of the mitochondrial respiratory chain. The mitoribosomes are attached to the mitochondrial inner membrane and translation products are cotranslationally integrated into the membrane. The chain is Large ribosomal subunit protein uL30m (mrpl33) from Schizosaccharomyces pombe (strain 972 / ATCC 24843) (Fission yeast).